The primary structure comprises 390 residues: LL-diaminopimelate aminotransferase 2 (390 aa).

Residues Y13 and G38 each contribute to the substrate site. Residues Y67, 102 to 103 (SK), Y127, N177, Y208, and 236 to 238 (SLS) each bind pyridoxal 5'-phosphate. Residues K103, Y127, and N177 each contribute to the substrate site. An N6-(pyridoxal phosphate)lysine modification is found at K239. Position 247 (R247) interacts with pyridoxal 5'-phosphate. Position 365 (R365) interacts with substrate.

This sequence belongs to the class-I pyridoxal-phosphate-dependent aminotransferase family. LL-diaminopimelate aminotransferase subfamily. In terms of assembly, homodimer. Requires pyridoxal 5'-phosphate as cofactor.

It catalyses the reaction (2S,6S)-2,6-diaminopimelate + 2-oxoglutarate = (S)-2,3,4,5-tetrahydrodipicolinate + L-glutamate + H2O + H(+). It participates in amino-acid biosynthesis; L-lysine biosynthesis via DAP pathway; LL-2,6-diaminopimelate from (S)-tetrahydrodipicolinate (aminotransferase route): step 1/1. Its function is as follows. Involved in the synthesis of meso-diaminopimelate (m-DAP or DL-DAP), required for both lysine and peptidoglycan biosynthesis. Catalyzes the direct conversion of tetrahydrodipicolinate to LL-diaminopimelate. The chain is LL-diaminopimelate aminotransferase 2 from Nostoc sp. (strain PCC 7120 / SAG 25.82 / UTEX 2576).